The chain runs to 455 residues: tRNA modification GTPase MnmE (455 aa).

(6S)-5-formyl-5,6,7,8-tetrahydrofolate-binding residues include R26, E86, and R125. One can recognise a TrmE-type G domain in the interval 222–376 (GLKTAIIGRP…VEEKINQIFF (155 aa)). N232 contributes to the K(+) binding site. GTP is bound by residues 232–237 (NVGKSS), 251–257 (TDIAGTT), and 276–279 (DTAG). S236 contacts Mg(2+). 3 residues coordinate K(+): T251, I253, and T256. T257 is a Mg(2+) binding site. K455 is a binding site for (6S)-5-formyl-5,6,7,8-tetrahydrofolate.

Belongs to the TRAFAC class TrmE-Era-EngA-EngB-Septin-like GTPase superfamily. TrmE GTPase family. As to quaternary structure, homodimer. Heterotetramer of two MnmE and two MnmG subunits. K(+) is required as a cofactor.

Its subcellular location is the cytoplasm. In terms of biological role, exhibits a very high intrinsic GTPase hydrolysis rate. Involved in the addition of a carboxymethylaminomethyl (cmnm) group at the wobble position (U34) of certain tRNAs, forming tRNA-cmnm(5)s(2)U34. In Lactococcus lactis subsp. lactis (strain IL1403) (Streptococcus lactis), this protein is tRNA modification GTPase MnmE.